The chain runs to 202 residues: Small ribosomal subunit protein uS4c (202 aa).

Residues 90–158 (MRSDNVIFRL…ISKNIELYQK (69 aa)) form the S4 RNA-binding domain.

This sequence belongs to the universal ribosomal protein uS4 family. In terms of assembly, part of the 30S ribosomal subunit. Contacts protein S5. The interaction surface between S4 and S5 is involved in control of translational fidelity.

It is found in the plastid. The protein resides in the chloroplast. One of the primary rRNA binding proteins, it binds directly to 16S rRNA where it nucleates assembly of the body of the 30S subunit. Its function is as follows. With S5 and S12 plays an important role in translational accuracy. This chain is Small ribosomal subunit protein uS4c (rps4), found in Exsertotheca crispa (Moss).